Reading from the N-terminus, the 299-residue chain is Ethylmalonyl-CoA decarboxylase (299 aa).

At K209 the chain carries N6-acetyllysine; alternate. K209 is modified (N6-succinyllysine; alternate). Residue K293 is modified to N6-succinyllysine.

It belongs to the enoyl-CoA hydratase/isomerase family.

The protein localises to the cytoplasm. It is found in the cytosol. The enzyme catalyses (2S)-ethylmalonyl-CoA + H(+) = butanoyl-CoA + CO2. It carries out the reaction (S)-methylmalonyl-CoA + H(+) = propanoyl-CoA + CO2. The catalysed reaction is (2R)-ethylmalonyl-CoA + H(+) = butanoyl-CoA + CO2. Functionally, decarboxylates ethylmalonyl-CoA, a potentially toxic metabolite, to form butyryl-CoA, suggesting it might be involved in metabolite proofreading. Acts preferentially on (S)-ethylmalonyl-CoA but also has some activity on the (R)-isomer. Also has methylmalonyl-CoA decarboxylase activity at lower level. The polypeptide is Ethylmalonyl-CoA decarboxylase (Echdc1) (Rattus norvegicus (Rat)).